The primary structure comprises 766 residues: Leucine-rich repeat and fibronectin type III domain-containing protein 1 (766 aa).

An N-terminal signal peptide occupies residues 1 to 31; sequence MAPGPFSSGLLSPPPAALPFLLLLWAGASRG. The 34-residue stretch at 32–65 folds into the LRRNT domain; it reads QPCPGRCICQNVAPTLTMLCAKTGLLFVPPAIDR. The Extracellular portion of the chain corresponds to 32–536; that stretch reads QPCPGRCICQ…LRAHFLGGTM (505 aa). LRR repeat units follow at residues 66-87, 90-111, 114-135, 138-159, 163-184, 187-208, and 211-232; these read RVVE…DFAN, SLVH…AFAD, ALRA…QLRG, NLRH…AFDA, TVED…AVGQ, NLNT…TFVQ, and KLVR…GLFL. N87 is a glycosylation site (N-linked (GlcNAc...) asparagine). Residues 252–298 enclose the LRRCT domain; that stretch reads NPLHCNCELLWLRRLTREDDLETCATPEHLTDRYFWSIPEEEFLCEP. The 88-residue stretch at 299 to 386 folds into the Ig-like domain; that stretch reads PLITRQAGGR…GEATAPVEVC (88 aa). A disulfide bridge links C321 with C370. N343 carries N-linked (GlcNAc...) asparagine glycosylation. Residues 397 to 422 are disordered; it reads PAAPPPLTEPGSSDIATPGRPGANDS. Residues 424 to 520 enclose the Fibronectin type-III domain; it reads TERRLVAAEL…GCVQFTTAGD (97 aa). The helical transmembrane segment at 537–557 threads the bilayer; that stretch reads IIAIGGVIVASVLVFIVLLMI. The Cytoplasmic segment spans residues 558 to 766; sequence RYKVYGDGDS…STEWMLESTV (209 aa). 2 disordered regions span residues 568–601 and 646–742; these read RRIK…PPAP and CLLP…GEDG. S713 carries the phosphoserine modification. Basic residues predominate over residues 714 to 727; sequence YPRRARRTKRHRST.

It belongs to the LRFN family. In terms of assembly, forms heteromeric complexes with LRFN2, LRFN4 and LRFN5; binding to LRFN2 and LRFN5 may be weaker than that to LRFN4. Also interacts with LRFN3. Forms homomeric complexes, but not across cell junctions. Interacts with DLG1, DLG2 and DLG4, but not with MAGI2, not CASK. Interacts with DLG3. Interacts with 2 AMPA receptor subunits GRIA1 and GRIA2 and NMDA receptor subunit GRIN1. In terms of processing, glycosylated. Mainly expressed in brain (at protein level) and testis. In brain, found in cerebral cortex (including pyramidal neurons), hippocampus (including CA3 and CA1 neurons), dentate gyrus, cerebellum (including Purkinje neurons) (at protein level) (at protein level). Also expressed in the olfactory bulb.

It localises to the membrane. Its subcellular location is the synapse. The protein localises to the postsynaptic density membrane. In terms of biological role, promotes neurite outgrowth in hippocampal neurons. Involved in the regulation of the differentiation and maintenance of excitatory synapses. Induces the clustering of excitatory postsynaptic proteins, including DLG4, DLGAP1, GRIA1 and GRIN1. The protein is Leucine-rich repeat and fibronectin type III domain-containing protein 1 (Lrfn1) of Rattus norvegicus (Rat).